Consider the following 480-residue polypeptide: Glutamyl-tRNA(Gln) amidotransferase subunit A (480 aa).

Residues K70 and S145 each act as charge relay system in the active site. S169 serves as the catalytic Acyl-ester intermediate.

This sequence belongs to the amidase family. GatA subfamily. As to quaternary structure, heterotrimer of A, B and C subunits.

It carries out the reaction L-glutamyl-tRNA(Gln) + L-glutamine + ATP + H2O = L-glutaminyl-tRNA(Gln) + L-glutamate + ADP + phosphate + H(+). In terms of biological role, allows the formation of correctly charged Gln-tRNA(Gln) through the transamidation of misacylated Glu-tRNA(Gln) in organisms which lack glutaminyl-tRNA synthetase. The reaction takes place in the presence of glutamine and ATP through an activated gamma-phospho-Glu-tRNA(Gln). This chain is Glutamyl-tRNA(Gln) amidotransferase subunit A, found in Lactobacillus delbrueckii subsp. bulgaricus (strain ATCC 11842 / DSM 20081 / BCRC 10696 / JCM 1002 / NBRC 13953 / NCIMB 11778 / NCTC 12712 / WDCM 00102 / Lb 14).